The sequence spans 142 residues: uncharacterized protein (142 aa).

This is an uncharacterized protein from Methanocaldococcus jannaschii (strain ATCC 43067 / DSM 2661 / JAL-1 / JCM 10045 / NBRC 100440) (Methanococcus jannaschii).